Here is a 637-residue protein sequence, read N- to C-terminus: MGKIIGIDLGTTNSCVAVMQGSQPTVIENSEGNRTTPSVVGFTKTGDRLVGQAAKRQAITNPKNTIFSIKRFMGRRFDEVGEEKKMAPYELINDSGEARVKINDKVYSPQEISAMVLQKMKQTAEDFLGEKVTEAVITVPAYFNDAQRQATKDAGRIAGLEVKRIINEPTAAALAYGLDKKNASEKVAVFDLGGGTFDISILELGEGVFEVKSTDGDTHLGGDDFDQKIIDYIAEEFKKQEGIDLRKDAITLQRLKEAAEKAKIELSSRSDTEINLPFITATQEGPKHLVINLTRAKFEAISADLFNKVLDPCRRAVKNAKIEMREIDEVVLVGGSTRIPKIQALVKEFFGKEPNKSVNPDEVVAIGAAIQGGVLKGDVTDVLLLDVTPLSLGIETLGGVMTKLIEANTTIPTKKQEVFSTASDNQTSVEVHVLQGERPMAADNKTLGRFHLGDIPPAPRGIPQVEVIFDIDANGILHVSAKDKATGKEQSIRIEASSKLSDAEINKMKDDAKQHADEDKKRKEEIDIKNSADALIFSTEKQLTELGEKIPTDKKSALEGSLDKLRDAYKNGTTESIKSAMDDLNSQWNSIASDLYQSGAGAAQAQPEAPQNSGSSQSSGGDGAVNAEYEVINDDKK.

Thr196 bears the Phosphothreonine; by autocatalysis mark. 2 disordered regions span residues 503–525 (AEIN…RKEE) and 598–637 (SGAG…DDKK). Over residues 598–619 (SGAGAAQAQPEAPQNSGSSQSS) the composition is skewed to low complexity.

It belongs to the heat shock protein 70 family.

Acts as a chaperone. This is Chaperone protein DnaK from Chlorobium chlorochromatii (strain CaD3).